Here is a 203-residue protein sequence, read N- to C-terminus: Glutathione-specific gamma-glutamylcyclotransferase (203 aa).

Val12–Ser17 is a substrate binding site. Glu105 acts as the Proton acceptor in catalysis.

It belongs to the gamma-glutamylcyclotransferase family. ChaC subfamily.

Its subcellular location is the cytoplasm. The protein resides in the nucleus. It catalyses the reaction glutathione = L-cysteinylglycine + 5-oxo-L-proline. In terms of biological role, gamma-glutamylcyclotransferase acting specifically on glutathione, but not on other gamma-glutamyl peptides. Allows utilization of gluthathione through subsequent cleavage of the Cys-Gly dipeptide by Cys-Gly metallodipeptidase dug1. This is Glutathione-specific gamma-glutamylcyclotransferase from Schizosaccharomyces pombe (strain 972 / ATCC 24843) (Fission yeast).